The following is a 72-amino-acid chain: Translation initiation factor IF-1 (72 aa).

The S1-like domain occupies 1 to 72 (MSKEDSFEME…SKGRITYRAR (72 aa)).

The protein belongs to the IF-1 family. As to quaternary structure, component of the 30S ribosomal translation pre-initiation complex which assembles on the 30S ribosome in the order IF-2 and IF-3, IF-1 and N-formylmethionyl-tRNA(fMet); mRNA recruitment can occur at any time during PIC assembly.

Its subcellular location is the cytoplasm. One of the essential components for the initiation of protein synthesis. Stabilizes the binding of IF-2 and IF-3 on the 30S subunit to which N-formylmethionyl-tRNA(fMet) subsequently binds. Helps modulate mRNA selection, yielding the 30S pre-initiation complex (PIC). Upon addition of the 50S ribosomal subunit IF-1, IF-2 and IF-3 are released leaving the mature 70S translation initiation complex. The chain is Translation initiation factor IF-1 from Pseudomonas savastanoi pv. phaseolicola (strain 1448A / Race 6) (Pseudomonas syringae pv. phaseolicola (strain 1448A / Race 6)).